Reading from the N-terminus, the 331-residue chain is 6-phosphogluconolactonase (331 aa).

Position 287 is an N6-acetyllysine (Lys-287).

It belongs to the cycloisomerase 2 family.

The catalysed reaction is 6-phospho-D-glucono-1,5-lactone + H2O = 6-phospho-D-gluconate + H(+). It functions in the pathway carbohydrate degradation; pentose phosphate pathway; D-ribulose 5-phosphate from D-glucose 6-phosphate (oxidative stage): step 2/3. Its function is as follows. Catalyzes the hydrolysis of 6-phosphogluconolactone to 6-phosphogluconate. The sequence is that of 6-phosphogluconolactonase from Escherichia coli O8 (strain IAI1).